The primary structure comprises 484 residues: Protein nucleotidyltransferase YdiU (484 aa).

Residues glycine 81, glycine 83, arginine 84, lysine 103, aspartate 115, glycine 116, arginine 166, and arginine 173 each contribute to the ATP site. Aspartate 244 (proton acceptor) is an active-site residue. Mg(2+) contacts are provided by asparagine 245 and aspartate 254. Position 254 (aspartate 254) interacts with ATP.

This sequence belongs to the SELO family. Mg(2+) is required as a cofactor. Mn(2+) serves as cofactor.

The catalysed reaction is L-seryl-[protein] + ATP = 3-O-(5'-adenylyl)-L-seryl-[protein] + diphosphate. The enzyme catalyses L-threonyl-[protein] + ATP = 3-O-(5'-adenylyl)-L-threonyl-[protein] + diphosphate. It catalyses the reaction L-tyrosyl-[protein] + ATP = O-(5'-adenylyl)-L-tyrosyl-[protein] + diphosphate. It carries out the reaction L-histidyl-[protein] + UTP = N(tele)-(5'-uridylyl)-L-histidyl-[protein] + diphosphate. The catalysed reaction is L-seryl-[protein] + UTP = O-(5'-uridylyl)-L-seryl-[protein] + diphosphate. The enzyme catalyses L-tyrosyl-[protein] + UTP = O-(5'-uridylyl)-L-tyrosyl-[protein] + diphosphate. In terms of biological role, nucleotidyltransferase involved in the post-translational modification of proteins. It can catalyze the addition of adenosine monophosphate (AMP) or uridine monophosphate (UMP) to a protein, resulting in modifications known as AMPylation and UMPylation. The sequence is that of Protein nucleotidyltransferase YdiU from Shewanella loihica (strain ATCC BAA-1088 / PV-4).